Consider the following 319-residue polypeptide: Olfactory receptor 5B21 (319 aa).

The Extracellular portion of the chain corresponds to 1–26 (MTSMENITEVTEFILLGLTDDPNLQV). Residue Asn-6 is glycosylated (N-linked (GlcNAc...) asparagine). Residues 27-47 (PLLLIFLFIYLVTLIGNGGMM) form a helical membrane-spanning segment. At 48–55 (VIIFSDSH) the chain is on the cytoplasmic side. A helical transmembrane segment spans residues 56–76 (LHTPMYFFLSNLSFVDLGYSS). Topologically, residues 77–100 (AVAPKMVAALQSGNKVISYNGCAA) are extracellular. Cys-98 and Cys-190 form a disulfide bridge. Residues 101-121 (QFFFFVGFATVECYLLASMAY) traverse the membrane as a helical segment. The Cytoplasmic portion of the chain corresponds to 122-134 (DRHAAVCRPLHYT). A helical transmembrane segment spans residues 135-155 (TTMTTGVCTILTIGSYTCGFL). At 156 to 197 (NASIHAADTFKLSFCGSNKINHFFCDIPPLLALACSSTHISK) the chain is on the extracellular side. The helical transmembrane segment at 198–218 (LVVFFVVGFNVFFTLLVIIIS) threads the bilayer. Residues 219–238 (YFFIYIAIQNMKSSEGRKKA) are Cytoplasmic-facing. The helical transmembrane segment at 239-259 (FSTCASHLTAVSIFYGTIIFM) threads the bilayer. Over 260–272 (YLQPSSGQSMDTD) the chain is Extracellular. Residues 273–293 (KIASVFYTVVIPMLNPLIYSL) traverse the membrane as a helical segment. Residues 294-319 (RNREVKSALWKILNRFYPASFSVSRK) lie on the Cytoplasmic side of the membrane.

This sequence belongs to the G-protein coupled receptor 1 family.

It localises to the cell membrane. Its function is as follows. Odorant receptor. This Mus musculus (Mouse) protein is Olfactory receptor 5B21.